Consider the following 283-residue polypeptide: Pantothenate synthetase (283 aa).

ATP is bound at residue 30-37 (MGYYHSGH). Histidine 37 (proton donor) is an active-site residue. Glutamine 61 serves as a coordination point for (R)-pantoate. Glutamine 61 provides a ligand contact to beta-alanine. 147-150 (GQKD) contacts ATP. Glutamine 153 is a binding site for (R)-pantoate. ATP contacts are provided by residues valine 176 and 184–187 (MSSR).

This sequence belongs to the pantothenate synthetase family. In terms of assembly, homodimer.

The protein resides in the cytoplasm. It carries out the reaction (R)-pantoate + beta-alanine + ATP = (R)-pantothenate + AMP + diphosphate + H(+). It participates in cofactor biosynthesis; (R)-pantothenate biosynthesis; (R)-pantothenate from (R)-pantoate and beta-alanine: step 1/1. Its function is as follows. Catalyzes the condensation of pantoate with beta-alanine in an ATP-dependent reaction via a pantoyl-adenylate intermediate. In Nitratidesulfovibrio vulgaris (strain DSM 19637 / Miyazaki F) (Desulfovibrio vulgaris), this protein is Pantothenate synthetase.